The chain runs to 149 residues: MIAENAPFWRRKTLEQLSQQEWESLCDGCGLCCLQKLEDEDDNSVYYTRIACKLLDLDTCQCSDYPNRFAHVPDCIQLTPGKADQFKWLPSTCGYRLVSEGKDLPAWHHLVCGDRQQVHEQRISQSGRMLSEHDVHEDDWEDHLIFRAS.

The protein belongs to the UPF0260 family.

In Pseudomonas putida (strain ATCC 700007 / DSM 6899 / JCM 31910 / BCRC 17059 / LMG 24140 / F1), this protein is UPF0260 protein Pput_1301.